The chain runs to 451 residues: UDP-N-acetylmuramate--L-alanine ligase (451 aa).

Residue 110–116 participates in ATP binding; that stretch reads GTHGKTT.

It belongs to the MurCDEF family.

The protein localises to the cytoplasm. The enzyme catalyses UDP-N-acetyl-alpha-D-muramate + L-alanine + ATP = UDP-N-acetyl-alpha-D-muramoyl-L-alanine + ADP + phosphate + H(+). It functions in the pathway cell wall biogenesis; peptidoglycan biosynthesis. Cell wall formation. The chain is UDP-N-acetylmuramate--L-alanine ligase from Francisella tularensis subsp. novicida (strain U112).